A 283-amino-acid polypeptide reads, in one-letter code: Pantothenate synthetase (283 aa).

30–37 serves as a coordination point for ATP; the sequence is MGNLHDGH. Catalysis depends on His-37, which acts as the Proton donor. Residue Gln-61 participates in (R)-pantoate binding. Beta-alanine is bound at residue Gln-61. 149–152 is a binding site for ATP; that stretch reads GEKD. (R)-pantoate is bound at residue Gln-155. Residues Val-178 and 186 to 189 each bind ATP; that span reads LSSR.

Belongs to the pantothenate synthetase family. In terms of assembly, homodimer.

It is found in the cytoplasm. It catalyses the reaction (R)-pantoate + beta-alanine + ATP = (R)-pantothenate + AMP + diphosphate + H(+). Its pathway is cofactor biosynthesis; (R)-pantothenate biosynthesis; (R)-pantothenate from (R)-pantoate and beta-alanine: step 1/1. Functionally, catalyzes the condensation of pantoate with beta-alanine in an ATP-dependent reaction via a pantoyl-adenylate intermediate. The sequence is that of Pantothenate synthetase from Salmonella arizonae (strain ATCC BAA-731 / CDC346-86 / RSK2980).